The following is a 390-amino-acid chain: Serpin B3 (390 aa).

Met-1 carries the N-acetylmethionine modification.

This sequence belongs to the serpin family. Ov-serpin subfamily. As to quaternary structure, interacts with MAPK8/JNK1. As to expression, squamous cells. Expressed in some hepatocellular carcinoma (at protein level).

The protein resides in the cytoplasm. Its function is as follows. May act as a papain-like cysteine protease inhibitor to modulate the host immune response against tumor cells. Also functions as an inhibitor of UV-induced apoptosis via suppression of the activity of c-Jun NH(2)-terminal kinase (JNK1). The chain is Serpin B3 (SERPINB3) from Homo sapiens (Human).